The primary structure comprises 271 residues: 4-hydroxy-tetrahydrodipicolinate reductase (271 aa).

NAD(+) contacts are provided by residues Gly-10 to Met-15, Glu-36, Gly-100 to Thr-102, and Ser-124 to Met-127. The Proton donor/acceptor role is filled by His-157. Position 158 (His-158) interacts with (S)-2,3,4,5-tetrahydrodipicolinate. Residue Lys-161 is the Proton donor of the active site. Residue Gly-167–Thr-168 coordinates (S)-2,3,4,5-tetrahydrodipicolinate.

This sequence belongs to the DapB family.

The protein localises to the cytoplasm. It carries out the reaction (S)-2,3,4,5-tetrahydrodipicolinate + NAD(+) + H2O = (2S,4S)-4-hydroxy-2,3,4,5-tetrahydrodipicolinate + NADH + H(+). The catalysed reaction is (S)-2,3,4,5-tetrahydrodipicolinate + NADP(+) + H2O = (2S,4S)-4-hydroxy-2,3,4,5-tetrahydrodipicolinate + NADPH + H(+). It functions in the pathway amino-acid biosynthesis; L-lysine biosynthesis via DAP pathway; (S)-tetrahydrodipicolinate from L-aspartate: step 4/4. Its function is as follows. Catalyzes the conversion of 4-hydroxy-tetrahydrodipicolinate (HTPA) to tetrahydrodipicolinate. The chain is 4-hydroxy-tetrahydrodipicolinate reductase from Rhodopseudomonas palustris (strain BisB18).